The primary structure comprises 495 residues: Chromosomal replication initiator protein DnaA (495 aa).

The tract at residues 1 to 91 (MTADPDPPFV…ITALSRHLGQ (91 aa)) is domain I, interacts with DnaA modulators. Residues 91–154 (QRVELGVRIA…TPAAEDPNAV (64 aa)) form a domain II region. Positions 155 to 371 (SLNRRYTFDT…GALIRVTAFA (217 aa)) are domain III, AAA+ region. ATP-binding residues include G199, G201, K202, and T203. The domain IV, binds dsDNA stretch occupies residues 372–495 (SLNKTPIDKS…TTRIRQRAKR (124 aa)).

It belongs to the DnaA family. In terms of assembly, oligomerizes as a right-handed, spiral filament on DNA at oriC.

The protein localises to the cytoplasm. Functionally, plays an essential role in the initiation and regulation of chromosomal replication. ATP-DnaA binds to the origin of replication (oriC) to initiate formation of the DNA replication initiation complex once per cell cycle. Binds the DnaA box (a 9 base pair repeat at the origin) and separates the double-stranded (ds)DNA. Forms a right-handed helical filament on oriC DNA; dsDNA binds to the exterior of the filament while single-stranded (ss)DNA is stabiized in the filament's interior. The ATP-DnaA-oriC complex binds and stabilizes one strand of the AT-rich DNA unwinding element (DUE), permitting loading of DNA polymerase. After initiation quickly degrades to an ADP-DnaA complex that is not apt for DNA replication. Binds acidic phospholipids. This chain is Chromosomal replication initiator protein DnaA, found in Mycobacterium sp. (strain JLS).